The primary structure comprises 501 residues: Sucrose-6-phosphate hydrolase (501 aa).

Residues 44-47 (LLND), Q63, 106-107 (YT), 167-168 (RD), and E222 contribute to the substrate site. The active site involves D47.

Belongs to the glycosyl hydrolase 32 family.

It carries out the reaction Hydrolysis of terminal non-reducing beta-D-fructofuranoside residues in beta-D-fructofuranosides.. It functions in the pathway glycan biosynthesis; sucrose metabolism. The sequence is that of Sucrose-6-phosphate hydrolase (scrB) from Pediococcus pentosaceus.